We begin with the raw amino-acid sequence, 494 residues long: Probable cytosol aminopeptidase (494 aa).

Mn(2+) is bound by residues K260 and D265. K272 is a catalytic residue. The Mn(2+) site is built by D283, D342, and E344. R346 is an active-site residue.

The protein belongs to the peptidase M17 family. The cofactor is Mn(2+).

Its subcellular location is the cytoplasm. The catalysed reaction is Release of an N-terminal amino acid, Xaa-|-Yaa-, in which Xaa is preferably Leu, but may be other amino acids including Pro although not Arg or Lys, and Yaa may be Pro. Amino acid amides and methyl esters are also readily hydrolyzed, but rates on arylamides are exceedingly low.. It catalyses the reaction Release of an N-terminal amino acid, preferentially leucine, but not glutamic or aspartic acids.. Functionally, presumably involved in the processing and regular turnover of intracellular proteins. Catalyzes the removal of unsubstituted N-terminal amino acids from various peptides. This Bacillus thuringiensis (strain Al Hakam) protein is Probable cytosol aminopeptidase.